We begin with the raw amino-acid sequence, 214 residues long: Guanylate kinase (214 aa).

Residues 6 to 192 (GTLYIISAPS…ALEDLKAIFR (187 aa)) enclose the Guanylate kinase-like domain. An ATP-binding site is contributed by 13–20 (APSGAGKT).

The protein belongs to the guanylate kinase family.

The protein resides in the cytoplasm. The catalysed reaction is GMP + ATP = GDP + ADP. Functionally, essential for recycling GMP and indirectly, cGMP. This is Guanylate kinase from Pseudomonas syringae pv. syringae (strain B728a).